A 168-amino-acid chain; its full sequence is Histone doublet miniH2B-H2A (168 aa).

It localises to the host nucleus. It is found in the host cytoplasm. The protein localises to the virion. Its function is as follows. Histone-like protein that is recruited to viral factories during viral replication and participates in viral DNA packaging and virion production probably by forming unstable nucleosome-like particles. May compact the viral DNA. This chain is Histone doublet miniH2B-H2A, found in Melbournevirus (MelV).